We begin with the raw amino-acid sequence, 122 residues long: Double-headed protease inhibitor, submandibular gland (122 aa).

Kazal-like domains are found at residues 10-70 and 71-121; these read GGRK…ECDI and ECTQ…QCQS. 6 disulfide bridges follow: Cys16–Cys50, Cys28–Cys47, Cys36–Cys68, Cys72–Cys101, Cys79–Cys98, and Cys87–Cys119.

It localises to the secreted. Functionally, this inhibitor is composed of two homologous actively inhibiting halves: one which inhibits trypsin, the other which inhibits elastase. The sequence is that of Double-headed protease inhibitor, submandibular gland from Martes martes (European pine marten).